Here is a 207-residue protein sequence, read N- to C-terminus: Thymidine kinase (207 aa).

Residues 15-22 (GCMFSGKS) and 88-91 (DEIQ) each bind ATP. Catalysis depends on E89, which acts as the Proton acceptor. C145, C148, C183, and H186 together coordinate Zn(2+). Residues 184-198 (RHHHEVPGKPKKRYN) are compositionally biased toward basic residues. Residues 184-207 (RHHHEVPGKPKKRYNHPLAGHTGE) are disordered.

The protein belongs to the thymidine kinase family. As to quaternary structure, homotetramer.

It is found in the cytoplasm. The enzyme catalyses thymidine + ATP = dTMP + ADP + H(+). The protein is Thymidine kinase of Geobacillus kaustophilus (strain HTA426).